Consider the following 327-residue polypeptide: D-alanine--D-alanine ligase (327 aa).

The ATP-grasp domain maps to K113 to A312. V139–T194 contacts ATP. Mg(2+)-binding residues include D266, E279, and N281.

It belongs to the D-alanine--D-alanine ligase family. Requires Mg(2+) as cofactor. It depends on Mn(2+) as a cofactor.

The protein localises to the cytoplasm. It carries out the reaction 2 D-alanine + ATP = D-alanyl-D-alanine + ADP + phosphate + H(+). It functions in the pathway cell wall biogenesis; peptidoglycan biosynthesis. Functionally, cell wall formation. The polypeptide is D-alanine--D-alanine ligase (Cupriavidus metallidurans (strain ATCC 43123 / DSM 2839 / NBRC 102507 / CH34) (Ralstonia metallidurans)).